Here is a 111-residue protein sequence, read N- to C-terminus: U-scoloptoxin(16)-Er8a (111 aa).

The first 26 residues, 1–26, serve as a signal peptide directing secretion; sequence MTSTRKLSVSCLIVFMVSSLIAVSSG.

It belongs to the scoloptoxin-16 family. Post-translationally, contains 4 disulfide bonds. In terms of tissue distribution, expressed by the venom gland.

It is found in the secreted. The chain is U-scoloptoxin(16)-Er8a from Ethmostigmus rubripes (Giant centipede).